A 208-amino-acid chain; its full sequence is MTKGILGKKVGMTQIFTESGEFIPVTVIEATPNVVLQVKTVETDGYEAVQVGFDDKREVLSNKPAKGHVAKANTAPKRFIREFKNIEGLEVGAELSVEQFEAGDVVDVTGTSKGKGFQGVIKRHGQSRGPMAHGSRYHRRPGSMGPVAPNRVFKNKRLAGRMGGNRVTVQNLEIVQVILEKNVILVKGNVPGAKKSLITIKSAVKAAK.

The segment at 116–148 (GFQGVIKRHGQSRGPMAHGSRYHRRPGSMGPVA) is disordered.

The protein belongs to the universal ribosomal protein uL3 family. In terms of assembly, part of the 50S ribosomal subunit. Forms a cluster with proteins L14 and L19.

In terms of biological role, one of the primary rRNA binding proteins, it binds directly near the 3'-end of the 23S rRNA, where it nucleates assembly of the 50S subunit. This chain is Large ribosomal subunit protein uL3, found in Streptococcus pyogenes serotype M6 (strain ATCC BAA-946 / MGAS10394).